A 519-amino-acid polypeptide reads, in one-letter code: Ubiquitin carboxyl-terminal hydrolase 30 (519 aa).

At 1 to 52 (MSWAPVSTWSRRTPLAACCSAPELPPAGAWKACAAGSLRIGPQGRCKMMKNW) the chain is on the mitochondrial intermembrane side. The helical transmembrane segment at 53–73 (GMIGGIAAALAAGIYVLWGPI) threads the bilayer. The Cytoplasmic segment spans residues 74–519 (SDRKKYRKGL…HPEDQRAAEK (446 aa)). The USP domain occupies 85 to 504 (PGLLNLGNTC…SAYLLFYERI (420 aa)). Catalysis depends on Cys-94, which acts as the Nucleophile. The interval 379-405 (SKQPANHLSAAEQETTDGKEGGAQNPT) is disordered. His-455 acts as the Proton acceptor in catalysis.

It belongs to the peptidase C19 family.

The protein localises to the mitochondrion outer membrane. It carries out the reaction Thiol-dependent hydrolysis of ester, thioester, amide, peptide and isopeptide bonds formed by the C-terminal Gly of ubiquitin (a 76-residue protein attached to proteins as an intracellular targeting signal).. Deubiquitinating enzyme that acts as a key inhibitor of mitophagy by counteracting the action of parkin (PRKN). The protein is Ubiquitin carboxyl-terminal hydrolase 30 (usp30) of Xenopus tropicalis (Western clawed frog).